The chain runs to 230 residues: Ribonuclease 1 (230 aa).

The signal sequence occupies residues 1 to 22 (MKILLASLCLISLLVILPSVFS). An RNA-binding site is contributed by Gln38. Cys44 and Cys50 are oxidised to a cystine. RNA is bound by residues His65, Phe115, 118-119 (HE), and 122-123 (KH). His65 functions as the Proton donor in the catalytic mechanism. Intrachain disulfides connect Cys80–Cys126, Cys186–Cys221, and Cys202–Cys213. Glu119 is a catalytic residue. Residue His123 is the Proton acceptor of the active site.

The protein belongs to the RNase T2 family.

It catalyses the reaction a ribonucleotidyl-ribonucleotide-RNA + H2O = a 3'-end 3'-phospho-ribonucleotide-RNA + a 5'-end dephospho-ribonucleoside-RNA + H(+). May remobilize phosphate, particularly when cells senesce or when phosphate becomes limiting. The protein is Ribonuclease 1 (RNS1) of Arabidopsis thaliana (Mouse-ear cress).